A 405-amino-acid polypeptide reads, in one-letter code: Nicotinate phosphoribosyltransferase (405 aa).

H230 is modified (phosphohistidine; by autocatalysis).

Belongs to the NAPRTase family. Post-translationally, transiently phosphorylated on a His residue during the reaction cycle. Phosphorylation strongly increases the affinity for substrates and increases the rate of nicotinate D-ribonucleotide production. Dephosphorylation regenerates the low-affinity form of the enzyme, leading to product release.

It catalyses the reaction nicotinate + 5-phospho-alpha-D-ribose 1-diphosphate + ATP + H2O = nicotinate beta-D-ribonucleotide + ADP + phosphate + diphosphate. Its pathway is cofactor biosynthesis; NAD(+) biosynthesis; nicotinate D-ribonucleotide from nicotinate: step 1/1. Catalyzes the synthesis of beta-nicotinate D-ribonucleotide from nicotinate and 5-phospho-D-ribose 1-phosphate at the expense of ATP. The polypeptide is Nicotinate phosphoribosyltransferase (Bordetella pertussis (strain Tohama I / ATCC BAA-589 / NCTC 13251)).